The following is a 292-amino-acid chain: 4-hydroxy-tetrahydrodipicolinate synthase (292 aa).

Thr45 provides a ligand contact to pyruvate. Tyr133 acts as the Proton donor/acceptor in catalysis. The active-site Schiff-base intermediate with substrate is the Lys161. Position 203 (Ile203) interacts with pyruvate.

The protein belongs to the DapA family. In terms of assembly, homodimer.

It is found in the cytoplasm. The enzyme catalyses L-aspartate 4-semialdehyde + pyruvate = (2S,4S)-4-hydroxy-2,3,4,5-tetrahydrodipicolinate + H2O + H(+). The protein operates within amino-acid biosynthesis; L-lysine biosynthesis via DAP pathway; (S)-tetrahydrodipicolinate from L-aspartate: step 3/4. In terms of biological role, catalyzes the condensation of (S)-aspartate-beta-semialdehyde [(S)-ASA] and pyruvate to 4-hydroxy-tetrahydrodipicolinate (HTPA). The protein is 4-hydroxy-tetrahydrodipicolinate synthase of Pseudomonas aeruginosa (strain ATCC 15692 / DSM 22644 / CIP 104116 / JCM 14847 / LMG 12228 / 1C / PRS 101 / PAO1).